Reading from the N-terminus, the 144-residue chain is Large ribosomal subunit protein uL15 (144 aa).

Residues 1–57 (MFLNTLRPGEGSKHAPKRVGRGIGSGLGKTGGRGHKGLKSRSGGSVKPGFEGGQMPL) are disordered. A compositionally biased stretch (gly residues) spans 21–31 (RGIGSGLGKTG).

This sequence belongs to the universal ribosomal protein uL15 family. In terms of assembly, part of the 50S ribosomal subunit.

Functionally, binds to the 23S rRNA. In Marinomonas sp. (strain MWYL1), this protein is Large ribosomal subunit protein uL15.